Here is a 319-residue protein sequence, read N- to C-terminus: Coproporphyrin III ferrochelatase 2 (319 aa).

Residues tyrosine 13, arginine 30, 46 to 47 (RY), serine 54, and tyrosine 125 contribute to the Fe-coproporphyrin III site. Residues histidine 181 and glutamate 262 each contribute to the Fe(2+) site.

The protein belongs to the ferrochelatase family.

The protein localises to the cytoplasm. The enzyme catalyses Fe-coproporphyrin III + 2 H(+) = coproporphyrin III + Fe(2+). It participates in porphyrin-containing compound metabolism; protoheme biosynthesis. In terms of biological role, involved in coproporphyrin-dependent heme b biosynthesis. Catalyzes the insertion of ferrous iron into coproporphyrin III to form Fe-coproporphyrin III. This chain is Coproporphyrin III ferrochelatase 2, found in Bacillus thuringiensis subsp. konkukian (strain 97-27).